The following is a 142-amino-acid chain: Biogenesis of lysosome-related organelles complex 1 subunit 2 (142 aa).

The segment at 1–33 (MAAAAEGVLATRSDEPARDDAAVETAEEAKEPA) is disordered. At Ala2 the chain carries N-acetylalanine. The span at 12 to 33 (RSDEPARDDAAVETAEEAKEPA) shows a compositional bias: basic and acidic residues. Residues 79 to 127 (EMKDIAINISRNLKDLNQKYAGLQPYLDQINVIEEQVAALEQAAYKLDA) adopt a coiled-coil conformation.

Belongs to the BLOC1S2 family. In terms of assembly, component of the biogenesis of lysosome-related organelles complex 1 (BLOC-1) composed of BLOC1S1, BLOC1S2, BLOC1S3, BLOC1S4, BLOC1S5, BLOC1S6, DTNBP1/BLOC1S7 and SNAPIN/BLOC1S8. Octamer composed of one copy each BLOC1S1, BLOC1S2, BLOC1S3, BLOC1S4, BLOC1S5, BLOC1S6, DTNBP1/BLOC1S7 and SNAPIN/BLOC1S8. Interacts directly with BLOC1S1, BLOC1S3, BLOC1S4, BLOC1S5 and SNAPIN. The BLOC-1 complex associates with the AP-3 protein complex and membrane protein cargos. Component of the BLOC-one-related complex (BORC) which is composed of BLOC1S1, BLOC1S2, BORCS5, BORCS6, BORCS7, BORCS8, KXD1 and SNAPIN. Interacts with gamma-tubulin. Interacts with IFT57. Isoform 1 and isoform 2 are widely expressed. Expressed in various malignant tumor tissues (at protein level).

The protein resides in the cytoplasm. Its subcellular location is the cytoskeleton. It localises to the microtubule organizing center. The protein localises to the centrosome. It is found in the lysosome membrane. Functionally, component of the BLOC-1 complex, a complex that is required for normal biogenesis of lysosome-related organelles (LRO), such as platelet dense granules and melanosomes. In concert with the AP-3 complex, the BLOC-1 complex is required to target membrane protein cargos into vesicles assembled at cell bodies for delivery into neurites and nerve terminals. The BLOC-1 complex, in association with SNARE proteins, is also proposed to be involved in neurite extension. As part of the BORC complex may play a role in lysosomes movement and localization at the cell periphery. Associated with the cytosolic face of lysosomes, the BORC complex may recruit ARL8B and couple lysosomes to microtubule plus-end-directed kinesin motor. May play a role in cell proliferation. The protein is Biogenesis of lysosome-related organelles complex 1 subunit 2 (BLOC1S2) of Homo sapiens (Human).